The chain runs to 107 residues: MVNEIDSESLSQRLADTEDVLLVDIRTPAEIAQGMIPDALQLPMHLIPIRMSEIPKDRDVVIYCRSGARSYQACAYLMQQGYGRVLNLRGGIIAWARHGLPIVAPEG.

In terms of domain architecture, Rhodanese spans 16–104 (DTEDVLLVDI…WARHGLPIVA (89 aa)). C64 functions as the Cysteine persulfide intermediate in the catalytic mechanism.

Monomer.

Its subcellular location is the cytoplasm. The protein operates within energy metabolism; sulfur metabolism. Its function is as follows. Sulfur carrier protein involved in sulfur trafficking for oxidative dissimilatory sulfur metabolism. Component of a sulfur relay system that starts with the sulfur-mobilizing rhodanese-like protein Rhd_2599 (Alvin_2599), which transfers the sulfur from a low-molecular-weight thiol, maybe glutathione, to the TusA protein (Alvin_2600); TusA serves as the sulfur donor for DsrEFH, which persulfurates DsrC; persulfurated DsrC very probably serves as a direct substrate for reverse-acting sulfite reductase, DsrAB. Is able to catalyze the sulfur transfer reaction from thiosulfate or glutathione (GSSH) to cyanide in vitro, however, thiosulfate is unlikely an in vivo substrate. The chain is Sulfurtransferase Alvin_2599 from Allochromatium vinosum (strain ATCC 17899 / DSM 180 / NBRC 103801 / NCIMB 10441 / D) (Chromatium vinosum).